Here is a 395-residue protein sequence, read N- to C-terminus: MCWPLLYPLMLGFSISPAECQTPSIYDDVESTREGQEASLRPTVELNESKSPDKPNPRGFPGKPCANNSDTLELPASSEALLLGWVPTRLVPAIYGLVVVVGLPANGLALWVLATRVPRLPSTILLMNLAVADLLLALVLPPRLVYHLRGQRWPFGEAACRVATAALYGHMYGSVLLLAAVSLDRYLALVHSLRARALRGQRLTTILCLVAWLSAATLVLPLTFHRQTFLLAGSDRMLCHDALPLAEQTSHWRPAFICLAVLGCFVPLLAMVLCYGATLRALAANGQRYSHAVRLTALVLFSAVAAFTPSNVLLVLHYSNPSPEAWGNLYGAYVPSLALSTLNSCVDPFIYYYVSHEFREKVRAMLCRQLKASSSSQASREAGSRGTAICSSTLL.

The signal sequence occupies residues 1-16; it reads MCWPLLYPLMLGFSIS. The propeptide at 17-58 is removed for receptor activation; the sequence is PAECQTPSIYDDVESTREGQEASLRPTVELNESKSPDKPNPR. The interval 46 to 66 is disordered; that stretch reads LNESKSPDKPNPRGFPGKPCA. Residues 47-56 show a composition bias toward basic and acidic residues; the sequence is NESKSPDKPN. At 59–93 the chain is on the extracellular side; it reads GFPGKPCANNSDTLELPASSEALLLGWVPTRLVPA. An N-linked (GlcNAc...) asparagine glycan is attached at N67. Residues 94-114 traverse the membrane as a helical segment; sequence IYGLVVVVGLPANGLALWVLA. Topologically, residues 115-119 are cytoplasmic; it reads TRVPR. The chain crosses the membrane as a helical span at residues 120 to 140; it reads LPSTILLMNLAVADLLLALVL. Topologically, residues 141 to 161 are extracellular; that stretch reads PPRLVYHLRGQRWPFGEAACR. Cysteines 160 and 239 form a disulfide. Residues 162–182 form a helical membrane-spanning segment; sequence VATAALYGHMYGSVLLLAAVS. At 183–203 the chain is on the cytoplasmic side; the sequence is LDRYLALVHSLRARALRGQRL. A helical membrane pass occupies residues 204–224; that stretch reads TTILCLVAWLSAATLVLPLTF. Over 225–254 the chain is Extracellular; that stretch reads HRQTFLLAGSDRMLCHDALPLAEQTSHWRP. A helical transmembrane segment spans residues 255-275; sequence AFICLAVLGCFVPLLAMVLCY. Residues 276-295 are Cytoplasmic-facing; it reads GATLRALAANGQRYSHAVRL. The helical transmembrane segment at 296–316 threads the bilayer; it reads TALVLFSAVAAFTPSNVLLVL. Topologically, residues 317–330 are extracellular; sequence HYSNPSPEAWGNLY. A helical membrane pass occupies residues 331 to 354; sequence GAYVPSLALSTLNSCVDPFIYYYV. Residues 355–395 are Cytoplasmic-facing; the sequence is SHEFREKVRAMLCRQLKASSSSQASREAGSRGTAICSSTLL.

Belongs to the G-protein coupled receptor 1 family. In terms of processing, a proteolytic cleavage generates a new N-terminus that functions as a tethered ligand.

It localises to the cell membrane. Receptor for activated thrombin or trypsin coupled to G proteins that stimulate phosphoinositide hydrolysis. May play a role in platelets activation. The polypeptide is Proteinase-activated receptor 4 (F2rl3) (Rattus norvegicus (Rat)).